The primary structure comprises 98 residues: Cystatin-B (98 aa).

The 80-residue stretch at 4–83 (GGTSQPVDAD…PCNGETLELS (80 aa)) folds into the Cystatin domain. A Secondary area of contact motif is present at residues 46-50 (QCVPG).

This sequence belongs to the cystatin family. As to expression, ubiquitously expressed in normal and lipopolysaccharide (LPS)-stimulated tissues including brain, eye, gullet, heart, liver, muscle, stomach, kidney, spleen, pyloric ceca, intestine and gill.

The protein resides in the cytoplasm. Greatly decreased inhibitory activity against papain protease by metal ions including ZnSO(4), CuSO(4), HgCl(2) and CoCl(2). Decreased inhibitory activity against papain protease by detergents including Tween 20, SDS and Brij 35. Thiol protease inhibitor. Has high papain, bovine cathepsin B and fish cathepsins F and X inhibitory activity and inhibits fish cathepsins L, S and K to a lesser extent in vitro. May be involved in innate immunity. The polypeptide is Cystatin-B (Paralichthys olivaceus (Bastard halibut)).